The sequence spans 368 residues: Cyclin-dependent kinase 2 (368 aa).

In terms of domain architecture, Protein kinase spans 45-330 (FCSLRRIGEG…AKGALSHRYF (286 aa)). Residues 51–59 (IGEGTYGVV) and lysine 74 contribute to the ATP site. The active-site Proton acceptor is the aspartate 170. Mg(2+) is bound by residues asparagine 175 and aspartate 188.

The protein belongs to the protein kinase superfamily. CMGC Ser/Thr protein kinase family. CDC2/CDKX subfamily. Interacts with cye-1; the interaction likely regulates cdk-2 activity and is probably required for gld-1 phosphorylation. Mg(2+) serves as cofactor.

It catalyses the reaction L-seryl-[protein] + ATP = O-phospho-L-seryl-[protein] + ADP + H(+). The catalysed reaction is L-threonyl-[protein] + ATP = O-phospho-L-threonyl-[protein] + ADP + H(+). In terms of biological role, serine/threonine-protein kinase which, in association with cye-1, regulates proliferation, quiescent state and cell fate during the development of several cell lineages. In the embryo, initiates the establishment of cell polarity through the recruitment of the centrosomal proteins spd-2 and spd-5 during prophase. Phosphorylation and inhibition of the translational repressor gld-1 by the cdk-2/cye-1 complex regulates the pool of germline stem cells and the size of the mitotic zone in the gonads by preventing entry into meiosis. This Caenorhabditis elegans protein is Cyclin-dependent kinase 2.